A 446-amino-acid chain; its full sequence is Tubulin alpha-1B chain (446 aa).

Residue Gln-11 participates in GTP binding. The segment at 34-55 (GRLMDDSPSKHDSGSTFFSETG) is disordered. The span at 35–46 (RLMDDSPSKHDS) shows a compositional bias: basic and acidic residues. Glu-69, Ser-138, Gly-142, Thr-143, Ser-177, Asn-204, and Asn-226 together coordinate GTP. Glu-69 serves as a coordination point for Mg(2+). Residue Glu-252 is part of the active site.

This sequence belongs to the tubulin family. Dimer of alpha and beta chains. A typical microtubule is a hollow water-filled tube with an outer diameter of 25 nm and an inner diameter of 15 nM. Alpha-beta heterodimers associate head-to-tail to form protofilaments running lengthwise along the microtubule wall with the beta-tubulin subunit facing the microtubule plus end conferring a structural polarity. Microtubules usually have 13 protofilaments but different protofilament numbers can be found in some organisms and specialized cells. Mg(2+) is required as a cofactor.

The protein localises to the cytoplasm. Its subcellular location is the cytoskeleton. The catalysed reaction is GTP + H2O = GDP + phosphate + H(+). In terms of biological role, tubulin is the major constituent of microtubules, a cylinder consisting of laterally associated linear protofilaments composed of alpha- and beta-tubulin heterodimers. Microtubules grow by the addition of GTP-tubulin dimers to the microtubule end, where a stabilizing cap forms. Below the cap, tubulin dimers are in GDP-bound state, owing to GTPase activity of alpha-tubulin. The sequence is that of Tubulin alpha-1B chain (TUB-1B) from Schizophyllum commune (Split gill fungus).